A 473-amino-acid polypeptide reads, in one-letter code: ATP synthase subunit beta (473 aa).

153-160 (GGAGVGKT) provides a ligand contact to ATP.

The protein belongs to the ATPase alpha/beta chains family. F-type ATPases have 2 components, CF(1) - the catalytic core - and CF(0) - the membrane proton channel. CF(1) has five subunits: alpha(3), beta(3), gamma(1), delta(1), epsilon(1). CF(0) has three main subunits: a(1), b(2) and c(9-12). The alpha and beta chains form an alternating ring which encloses part of the gamma chain. CF(1) is attached to CF(0) by a central stalk formed by the gamma and epsilon chains, while a peripheral stalk is formed by the delta and b chains.

The protein resides in the cell inner membrane. The enzyme catalyses ATP + H2O + 4 H(+)(in) = ADP + phosphate + 5 H(+)(out). Functionally, produces ATP from ADP in the presence of a proton gradient across the membrane. The catalytic sites are hosted primarily by the beta subunits. The sequence is that of ATP synthase subunit beta from Rickettsia canadensis (strain McKiel).